The primary structure comprises 319 residues: MASPAAGGVVIVGSGLIGRSWAMLFASGGFKVKLYDIEQQQITDALENIRKEMKSLEQSGSLKGSLSAERQLSLISGCGNLAEAVEGAVHIQECVPENLELKKKIFAQLDRIVDDRVILSSSSSCLLPSKLFSGLAHVKQCIVAHPVNPPYYVPLVELVPHPETAPATMDRTYALMKKIGQSPVRVLKEIDGFVLNRLQYAVISEAWRLVEEEIVSPSDLDLVMSDGLGMRYAFIGPLETMHLNAEGVISYCERYSEGMKHVLSTFGPVPEFSGATVERVSEDMCMKVPDDPEHLAARRQWRDDCLMKLSILKYQMQPK.

The residue at position 2 (Ala2) is an N-acetylalanine. Ser3 carries the post-translational modification Phosphoserine. NAD(+)-binding positions include 16–17 (LI), Asp36, Glu97, and Lys102.

Belongs to the 3-hydroxyacyl-CoA dehydrogenase family. As to quaternary structure, homodimer. Widely expressed, with highest levels in liver. Undetectable in skeletal muscle.

It is found in the cytoplasm. It carries out the reaction L-gulonate + NAD(+) = 3-dehydro-L-gulonate + NADH + H(+). Its activity is regulated as follows. Inhibited by malonate. In terms of biological role, has high L-gulonate 3-dehydrogenase activity. It also exhibits low dehydrogenase activity toward L-3-hydroxybutyrate (HBA) and L-threonate. The sequence is that of Lambda-crystallin homolog (Cryl1) from Mus musculus (Mouse).